A 97-amino-acid polypeptide reads, in one-letter code: Phosphoribosyl-ATP pyrophosphatase (97 aa).

Belongs to the PRA-PH family.

The protein localises to the cytoplasm. The enzyme catalyses 1-(5-phospho-beta-D-ribosyl)-ATP + H2O = 1-(5-phospho-beta-D-ribosyl)-5'-AMP + diphosphate + H(+). It participates in amino-acid biosynthesis; L-histidine biosynthesis; L-histidine from 5-phospho-alpha-D-ribose 1-diphosphate: step 2/9. The chain is Phosphoribosyl-ATP pyrophosphatase from Methanoculleus marisnigri (strain ATCC 35101 / DSM 1498 / JR1).